A 252-amino-acid chain; its full sequence is Indole-3-glycerol phosphate synthase (252 aa).

The protein belongs to the TrpC family.

The enzyme catalyses 1-(2-carboxyphenylamino)-1-deoxy-D-ribulose 5-phosphate + H(+) = (1S,2R)-1-C-(indol-3-yl)glycerol 3-phosphate + CO2 + H2O. It participates in amino-acid biosynthesis; L-tryptophan biosynthesis; L-tryptophan from chorismate: step 4/5. This chain is Indole-3-glycerol phosphate synthase, found in Listeria welshimeri serovar 6b (strain ATCC 35897 / DSM 20650 / CCUG 15529 / CIP 8149 / NCTC 11857 / SLCC 5334 / V8).